Reading from the N-terminus, the 446-residue chain is MAPNTSTMDETGLPVERDFSFRILTACFLSLLILSTLLGNTLVCAAVIRFRHLRSKVTNFFVISLAVSDLLVAVLVMPWKAVAEIAGFWPFGSFCNIWVAFDIMCSTASILNLCVISVDRYWAISSPFQYERKMTPKAAFILISVAWTLSVLISFIPVQLSWHKAKPTWPLDGNFTSLEDAEDDNCDTRLSRTYAISSSLISFYIPVAIMIVTYTSIYRIAQKQIRRISALERAAVHAKNCQTTTGNGNPVECSQSESSFKMSFKRETKVLKTLSVIMGVFVCCWLPFFISNCMVPFCGSEETQPFCIDSITFDVFVWFGWANSSLNPIIYAFNADFQKAFSTLLGCYRLCPTTNNAIETVSINNNGAVMFSSHHEPRGSISKDCNLVYLIPHAVGSSEDLKREEAGGIPKPLEKLSPALSVILDYDTDVSLEKIQPVTHSGQHST.

Over 1–22 (MAPNTSTMDETGLPVERDFSFR) the chain is Extracellular. Residue asparagine 4 is glycosylated (N-linked (GlcNAc...) asparagine). The chain crosses the membrane as a helical span at residues 23–48 (ILTACFLSLLILSTLLGNTLVCAAVI). The Cytoplasmic segment spans residues 49 to 59 (RFRHLRSKVTN). A helical membrane pass occupies residues 60–86 (FFVISLAVSDLLVAVLVMPWKAVAEIA). Over 87–95 (GFWPFGSFC) the chain is Extracellular. Cysteine 95 and cysteine 186 are disulfide-bonded. Residues 96–118 (NIWVAFDIMCSTASILNLCVISV) form a helical membrane-spanning segment. Residues 119–137 (DRYWAISSPFQYERKMTPK) lie on the Cytoplasmic side of the membrane. Residues 138-162 (AAFILISVAWTLSVLISFIPVQLSW) traverse the membrane as a helical segment. The Extracellular segment spans residues 163-192 (HKAKPTWPLDGNFTSLEDAEDDNCDTRLSR). Residues 193–218 (TYAISSSLISFYIPVAIMIVTYTSIY) traverse the membrane as a helical segment. Residues 219–272 (RIAQKQIRRISALERAAVHAKNCQTTTGNGNPVECSQSESSFKMSFKRETKVLK) lie on the Cytoplasmic side of the membrane. A helical membrane pass occupies residues 273–299 (TLSVIMGVFVCCWLPFFISNCMVPFCG). Over 300-312 (SEETQPFCIDSIT) the chain is Extracellular. Residues 313–337 (FDVFVWFGWANSSLNPIIYAFNADF) form a helical membrane-spanning segment. Over 338 to 446 (QKAFSTLLGC…PVTHSGQHST (109 aa)) the chain is Cytoplasmic. 2 S-palmitoyl cysteine lipidation sites follow: cysteine 347 and cysteine 351. Serine 441 is subject to Phosphoserine.

This sequence belongs to the G-protein coupled receptor 1 family. As to quaternary structure, interacts with DNAJC14 via its C-terminus. Interacts with DRD2. Interacts with DORIP1.

Its subcellular location is the cell membrane. It localises to the endoplasmic reticulum membrane. The protein localises to the cell projection. The protein resides in the cilium membrane. It is found in the dendrite. Its subcellular location is the dendritic spine. Functionally, dopamine receptor whose activity is mediated by G proteins which activate adenylyl cyclase. The protein is D(1A) dopamine receptor (Drd1) of Mus musculus (Mouse).